Consider the following 290-residue polypeptide: Probable porphobilinogen deaminase (290 aa).

Cys-230 is modified (S-(dipyrrolylmethanemethyl)cysteine).

This sequence belongs to the HMBS family. Requires dipyrromethane as cofactor.

It carries out the reaction 4 porphobilinogen + H2O = hydroxymethylbilane + 4 NH4(+). The protein operates within porphyrin-containing compound metabolism; protoporphyrin-IX biosynthesis; coproporphyrinogen-III from 5-aminolevulinate: step 2/4. Its function is as follows. Tetrapolymerization of the monopyrrole PBG into the hydroxymethylbilane pre-uroporphyrinogen in several discrete steps. In Metallosphaera sedula (strain ATCC 51363 / DSM 5348 / JCM 9185 / NBRC 15509 / TH2), this protein is Probable porphobilinogen deaminase.